Consider the following 259-residue polypeptide: Glandular kallikrein-10 (259 aa).

Positions 1 to 18 are cleaved as a signal peptide; the sequence is MWFLILFLALSLGGIDAA. Residues 19–24 constitute a propeptide, activation peptide; the sequence is PPGQSR. The Peptidase S1 domain occupies 25–256; sequence IVGGYKCEKN…FTSWIKEVMK (232 aa). 5 disulfide bridges follow: cysteine 31-cysteine 171, cysteine 48-cysteine 64, cysteine 150-cysteine 217, cysteine 182-cysteine 196, and cysteine 207-cysteine 232. Histidine 63 (charge relay system) is an active-site residue. N-linked (GlcNAc...) asparagine glycosylation is found at asparagine 91 and asparagine 106. Aspartate 118 serves as the catalytic Charge relay system. Serine 211 acts as the Charge relay system in catalysis.

The protein belongs to the peptidase S1 family. Kallikrein subfamily. In terms of assembly, heterodimer of a light chain and heavy chain linked by a disulfide bond. In terms of processing, probably N- and O-glycosylated. As to expression, kidney and submandibular gland, where it is found in the granular convoluted tubule and striated duct cells. It is likely that the enzyme is mainly synthesized in the granular convoluted tubules and then transferred to other tissues by release into the vasculature or interstitial space.

The catalysed reaction is Preferential cleavage of Arg-|-Xaa bonds in small molecule substrates. Highly selective action to release kallidin (lysyl-bradykinin) from kininogen involves hydrolysis of Met-|-Xaa or Leu-|-Xaa.. In terms of biological role, glandular kallikreins cleave Met-Lys and Arg-Ser bonds in kininogen to release Lys-bradykinin. This protein may be involved in the regulation of renal function. The protein is Glandular kallikrein-10 (Klk10) of Rattus norvegicus (Rat).